We begin with the raw amino-acid sequence, 434 residues long: Enolase (434 aa).

Gln-165 provides a ligand contact to (2R)-2-phosphoglycerate. The active-site Proton donor is Glu-207. Mg(2+) contacts are provided by Asp-244, Glu-291, and Asp-318. 4 residues coordinate (2R)-2-phosphoglycerate: Lys-343, Arg-372, Ser-373, and Lys-394. The Proton acceptor role is filled by Lys-343.

It belongs to the enolase family. The cofactor is Mg(2+).

The protein resides in the cytoplasm. It localises to the secreted. The protein localises to the cell surface. It carries out the reaction (2R)-2-phosphoglycerate = phosphoenolpyruvate + H2O. It functions in the pathway carbohydrate degradation; glycolysis; pyruvate from D-glyceraldehyde 3-phosphate: step 4/5. In terms of biological role, catalyzes the reversible conversion of 2-phosphoglycerate (2-PG) into phosphoenolpyruvate (PEP). It is essential for the degradation of carbohydrates via glycolysis. The sequence is that of Enolase from Macrococcus caseolyticus (strain JCSC5402) (Macrococcoides caseolyticum).